We begin with the raw amino-acid sequence, 256 residues long: Nickel import ATP-binding protein NikD (256 aa).

Residues 6–245 (LEIRGLRIET…PASATARTLL (240 aa)) enclose the ABC transporter domain. An ATP-binding site is contributed by 38–45 (GASGSGKS).

This sequence belongs to the ABC transporter superfamily. Nickel importer (TC 3.A.1.5.3) family. In terms of assembly, the complex is composed of two ATP-binding proteins (NikD and NikE), two transmembrane proteins (NikB and NikC) and a solute-binding protein (NikA).

The protein localises to the cell inner membrane. The catalysed reaction is Ni(2+)(out) + ATP + H2O = Ni(2+)(in) + ADP + phosphate + H(+). Part of the ABC transporter complex NikABCDE involved in nickel import. Responsible for energy coupling to the transport system. In Pseudomonas putida (strain ATCC 47054 / DSM 6125 / CFBP 8728 / NCIMB 11950 / KT2440), this protein is Nickel import ATP-binding protein NikD.